The sequence spans 436 residues: C4-dicarboxylate transport protein 2 (436 aa).

Helical transmembrane passes span 14-34 (VLVA…TAVA), 45-65 (LIKM…IAGM), 77-97 (MALL…LVVV), 142-162 (VVGA…VLFG), 198-218 (PIGA…GSLV), 223-243 (LMLC…GGIA), 290-310 (VVGL…SIYL), 331-351 (ITLL…TGSG), and 353-373 (IVLA…LALI). The segment at 414–436 (ELAGEGNASSPASDIPVGGREAV) is disordered.

The protein belongs to the dicarboxylate/amino acid:cation symporter (DAACS) (TC 2.A.23) family.

Its subcellular location is the cell inner membrane. In terms of biological role, responsible for the transport of dicarboxylates such as succinate, fumarate, and malate from the periplasm across the membrane. This Pseudomonas aeruginosa (strain UCBPP-PA14) protein is C4-dicarboxylate transport protein 2.